A 221-amino-acid polypeptide reads, in one-letter code: Toll/interleukin-1 receptor domain-containing adapter protein (221 aa).

The interval 1 to 82 (MASSTSLPAP…HASDSGSSRW (82 aa)) is disordered. Low complexity predominate over residues 48-67 (SQPTSQDSPLPPSLSSVTSP). One can recognise a TIR domain in the interval 84–213 (KDYDVCVCHS…GGFRQVKEAV (130 aa)). Cystine bridges form between Cys-89–Cys-134 and Cys-142–Cys-174.

In terms of assembly, homodimer. Also forms heterodimers with MYD88. May interact with PIK3AP1. Interacts with TLR4 and IRAK2 via their respective TIR domains. Interacts with BMX and TBK1. Interacts with EIF2AK2. Does not interact with IRAK1, nor TLR9. Interacts with TLR2. Interacts with RAGE/AGER. (Microbial infection) In case of infection, interacts with B.melitensis protein TcpB (AC Q8YF53); TcpB abolishes the TLR4-TIRAP interaction and downstream signaling. Phosphorylated by IRAK1 and IRAK4. Also phosphorylated by BTK. In terms of processing, polyubiquitinated. Polyubiquitination follows phosphorylation by BTK and leads to TIRAP degradation. Highly expressed in liver, kidney, spleen, skeletal muscle and heart. Also detected in peripheral blood leukocytes, lung, placenta, small intestine, thymus, colon and brain.

It localises to the cytoplasm. Its subcellular location is the cell membrane. The protein localises to the membrane. In terms of biological role, adapter involved in TLR2, TLR4 and RAGE signaling pathways in the innate immune response. Acts via IRAK2 and TRAF-6, leading to the activation of NF-kappa-B, MAPK1, MAPK3 and JNK, and resulting in cytokine secretion and the inflammatory response. Positively regulates the production of TNF-alpha (TNF) and interleukin-6 (IL6). The chain is Toll/interleukin-1 receptor domain-containing adapter protein (TIRAP) from Homo sapiens (Human).